The following is a 700-amino-acid chain: Hedgehog-interacting protein (700 aa).

A signal peptide spans 1-17 (MLKMLSFKLLLLAVALG). N-linked (GlcNAc...) asparagine glycosylation occurs at asparagine 99. 11 disulfide bridges follow: cysteine 216–cysteine 536, cysteine 218–cysteine 543, cysteine 402–cysteine 624, cysteine 435–cysteine 452, cysteine 500–cysteine 594, cysteine 608–cysteine 617, cysteine 612–cysteine 623, cysteine 625–cysteine 634, cysteine 639–cysteine 649, cysteine 643–cysteine 655, and cysteine 657–cysteine 666. The interaction with SHH zinc binding site stretch occupies residues 376–388 (LDDMEEMDGLSDF). Aspartate 383 contacts Zn(2+). N-linked (GlcNAc...) asparagine glycans are attached at residues asparagine 416, asparagine 447, and asparagine 459. 2 consecutive EGF-like domains span residues 607–634 (ECSRLCRNGYCTPTGKCCCSPGWEGDFC) and 635–667 (RTAKCEPACRHGGVCVRPNKCLCKKGYLGPQCE).

Belongs to the HHIP family. As to quaternary structure, interacts with all three hedgehog family members, SHH, IHH and DHH. As to expression, widely expressed in fetal and adult tissues. Highest expression in adult heart, liver and pancreas, and in fetal kidney.

The protein resides in the cell membrane. Its subcellular location is the secreted. It localises to the cytoplasm. Modulates hedgehog signaling in several cell types including brain and lung through direct interaction with members of the hedgehog family. The chain is Hedgehog-interacting protein (HHIP) from Homo sapiens (Human).